Here is a 167-residue protein sequence, read N- to C-terminus: SsrA-binding protein (167 aa).

This sequence belongs to the SmpB family.

Its subcellular location is the cytoplasm. In terms of biological role, required for rescue of stalled ribosomes mediated by trans-translation. Binds to transfer-messenger RNA (tmRNA), required for stable association of tmRNA with ribosomes. tmRNA and SmpB together mimic tRNA shape, replacing the anticodon stem-loop with SmpB. tmRNA is encoded by the ssrA gene; the 2 termini fold to resemble tRNA(Ala) and it encodes a 'tag peptide', a short internal open reading frame. During trans-translation Ala-aminoacylated tmRNA acts like a tRNA, entering the A-site of stalled ribosomes, displacing the stalled mRNA. The ribosome then switches to translate the ORF on the tmRNA; the nascent peptide is terminated with the 'tag peptide' encoded by the tmRNA and targeted for degradation. The ribosome is freed to recommence translation, which seems to be the essential function of trans-translation. The protein is SsrA-binding protein of Stenotrophomonas maltophilia (strain K279a).